The chain runs to 113 residues: U11-theraphotoxin-Hhn1e (113 aa).

The signal sequence occupies residues methionine 1–alanine 21. A propeptide spanning residues aspartate 22 to arginine 74 is cleaved from the precursor. Positions leucine 60–asparagine 69 are enriched in basic and acidic residues. The tract at residues leucine 60–proline 87 is disordered. Intrachain disulfides connect cysteine 75-cysteine 90 and cysteine 89-cysteine 110.

It belongs to the neurotoxin 14 (magi-1) family. 01 (HNTX-16) subfamily. As to expression, expressed by the venom gland.

It is found in the secreted. In terms of biological role, probable ion channel inhibitor. The protein is U11-theraphotoxin-Hhn1e of Cyriopagopus hainanus (Chinese bird spider).